The chain runs to 560 residues: Glucose-6-phosphate isomerase, cytosolic (560 aa).

Ala-2 is subject to N-acetylalanine. The active-site Proton donor is the Glu-361. Active-site residues include His-392 and Lys-517.

This sequence belongs to the GPI family. Homodimer.

It is found in the cytoplasm. It carries out the reaction alpha-D-glucose 6-phosphate = beta-D-fructose 6-phosphate. It functions in the pathway carbohydrate degradation; glycolysis; D-glyceraldehyde 3-phosphate and glycerone phosphate from D-glucose: step 2/4. With respect to regulation, inhibited by glycerol-3-P (G3P). This Arabidopsis thaliana (Mouse-ear cress) protein is Glucose-6-phosphate isomerase, cytosolic (PGIC).